The sequence spans 138 residues: Ribulose bisphosphate carboxylase small subunit (138 aa).

The protein belongs to the RuBisCO small chain family. As to quaternary structure, heterohexadecamer of 8 large and 8 small subunits.

It is found in the plastid. The protein localises to the chloroplast. Its function is as follows. RuBisCO catalyzes two reactions: the carboxylation of D-ribulose 1,5-bisphosphate, the primary event in carbon dioxide fixation, as well as the oxidative fragmentation of the pentose substrate in the photorespiration process. Both reactions occur simultaneously and in competition at the same active site. Although the small subunit is not catalytic it is essential for maximal activity. The chain is Ribulose bisphosphate carboxylase small subunit from Cyanidium caldarium (Red alga).